Here is a 1317-residue protein sequence, read N- to C-terminus: DNA-directed RNA polymerase subunit beta' (1317 aa).

Zn(2+) contacts are provided by Cys60, Cys62, Cys75, and Cys78. Positions 535, 537, and 539 each coordinate Mg(2+). Zn(2+)-binding residues include Cys890, Cys967, Cys974, and Cys977.

This sequence belongs to the RNA polymerase beta' chain family. In terms of assembly, the RNAP catalytic core consists of 2 alpha, 1 beta, 1 beta' and 1 omega subunit. When a sigma factor is associated with the core the holoenzyme is formed, which can initiate transcription. The cofactor is Mg(2+). Requires Zn(2+) as cofactor.

The catalysed reaction is RNA(n) + a ribonucleoside 5'-triphosphate = RNA(n+1) + diphosphate. Its function is as follows. DNA-dependent RNA polymerase catalyzes the transcription of DNA into RNA using the four ribonucleoside triphosphates as substrates. This Nocardia farcinica (strain IFM 10152) protein is DNA-directed RNA polymerase subunit beta'.